The chain runs to 128 residues: Large ribosomal subunit protein uL22 (128 aa).

Belongs to the universal ribosomal protein uL22 family. As to quaternary structure, part of the 50S ribosomal subunit.

This protein binds specifically to 23S rRNA; its binding is stimulated by other ribosomal proteins, e.g. L4, L17, and L20. It is important during the early stages of 50S assembly. It makes multiple contacts with different domains of the 23S rRNA in the assembled 50S subunit and ribosome. Its function is as follows. The globular domain of the protein is located near the polypeptide exit tunnel on the outside of the subunit, while an extended beta-hairpin is found that lines the wall of the exit tunnel in the center of the 70S ribosome. The protein is Large ribosomal subunit protein uL22 of Rhodopseudomonas palustris (strain HaA2).